Reading from the N-terminus, the 266-residue chain is Dioicin-2 (266 aa).

2 disulfide bridges follow: Cys32-Cys263 and Cys85-Cys102. Glu176 is an active-site residue.

Its subcellular location is the secreted. The protein localises to the extracellular space. It is found in the golgi apparatus. It localises to the vacuole. It carries out the reaction Endohydrolysis of the N-glycosidic bond at one specific adenosine on the 28S rRNA.. In terms of biological role, nicks pBR322 dsDNA. Has adenine polynucleotide glycosidase activity on herring sperm ssDNA. The polypeptide is Dioicin-2 (Phytolacca dioica (Bella sombra tree)).